We begin with the raw amino-acid sequence, 254 residues long: 3-deoxy-manno-octulosonate cytidylyltransferase (254 aa).

Belongs to the KdsB family.

Its subcellular location is the cytoplasm. The enzyme catalyses 3-deoxy-alpha-D-manno-oct-2-ulosonate + CTP = CMP-3-deoxy-beta-D-manno-octulosonate + diphosphate. It functions in the pathway nucleotide-sugar biosynthesis; CMP-3-deoxy-D-manno-octulosonate biosynthesis; CMP-3-deoxy-D-manno-octulosonate from 3-deoxy-D-manno-octulosonate and CTP: step 1/1. It participates in bacterial outer membrane biogenesis; lipopolysaccharide biosynthesis. Activates KDO (a required 8-carbon sugar) for incorporation into bacterial lipopolysaccharide in Gram-negative bacteria. This Porphyromonas gingivalis (strain ATCC BAA-308 / W83) protein is 3-deoxy-manno-octulosonate cytidylyltransferase.